Here is a 489-residue protein sequence, read N- to C-terminus: Protein P7 (489 aa).

RNA-binding stretches follow at residues threonine 129–leucine 251 and alanine 321–asparagine 351.

The protein belongs to the phytoreovirus protein P7 family.

It localises to the virion. The protein localises to the host cytoplasm. Probable component of the transcriptional machinery present in the inner capsid. Displays dsRNA binding activity and may play an important role in the sorting of viral RNA and virion assembly. Together with the RNA-directed RNA polymerase P1 and capping enzyme P5, forms an transcriptional complex positioned near the channels situated at each of the five-fold vertices of the core. This chain is Protein P7, found in Rice gall dwarf virus (RGDV).